The sequence spans 492 residues: GTPase Der (492 aa).

2 consecutive EngA-type G domains span residues 3 to 167 (FTLA…DAYA) and 201 to 381 (LQVA…EVWN). Residues 9–16 (GRPNVGKS), 56–60 (DTAGL), 119–122 (NKAE), 207–214 (GRPNAGKS), 259–263 (DTAGM), and 324–327 (NKWD) each bind GTP. The KH-like domain maps to 382-468 (RRVTTAQLNR…RLWMRGQNDA (87 aa)). Positions 462-492 (MRGQNDANPYKGRKKAPPSKLRKHTDGRRKD) are disordered. The segment covering 472–492 (KGRKKAPPSKLRKHTDGRRKD) has biased composition (basic residues).

The protein belongs to the TRAFAC class TrmE-Era-EngA-EngB-Septin-like GTPase superfamily. EngA (Der) GTPase family. As to quaternary structure, associates with the 50S ribosomal subunit.

Functionally, GTPase that plays an essential role in the late steps of ribosome biogenesis. The polypeptide is GTPase Der (Roseobacter denitrificans (strain ATCC 33942 / OCh 114) (Erythrobacter sp. (strain OCh 114))).